We begin with the raw amino-acid sequence, 93 residues long: Small ribosomal subunit protein uS19 (93 aa).

The protein belongs to the universal ribosomal protein uS19 family.

Its function is as follows. Protein S19 forms a complex with S13 that binds strongly to the 16S ribosomal RNA. This chain is Small ribosomal subunit protein uS19, found in Caldanaerobacter subterraneus subsp. tengcongensis (strain DSM 15242 / JCM 11007 / NBRC 100824 / MB4) (Thermoanaerobacter tengcongensis).